Consider the following 248-residue polypeptide: MDIEQPSINVINSLYQISGVEVGQHFYLQIGNFQVHAQVLITSWVVIAILLGLSIVATRDLQTIPTGSQNFIEYVLEFIRDLTRTQIGEEEYRPWVPFIGTMFLFIFVSNWSGALFPWRIIQLPHGELAAPTNDINTTVALALLTSVAYFYAGLHKRGLSYFGKYIQPTPVLLPINILEDFTKPLSLSFRLFGNILADELVVAVLISLVPLVVPIPMMFLGLFTSAIQALIFATLAAAYIGESMEGHH.

Transmembrane regions (helical) follow at residues 37–57 (AQVL…SIVA), 96–116 (VPFI…GALF), 135–155 (INTT…AGLH), 200–220 (LVVA…MMFL), and 221–241 (GLFT…AYIG).

It belongs to the ATPase A chain family. F-type ATPases have 2 components, CF(1) - the catalytic core - and CF(0) - the membrane proton channel. CF(1) has five subunits: alpha(3), beta(3), gamma(1), delta(1), epsilon(1). CF(0) has four main subunits: a, b, b' and c.

The protein localises to the plastid. It is found in the chloroplast thylakoid membrane. Functionally, key component of the proton channel; it plays a direct role in the translocation of protons across the membrane. This Angiopteris evecta (Mule's foot fern) protein is ATP synthase subunit a, chloroplastic.